A 198-amino-acid chain; its full sequence is NAD(P)H dehydrogenase (quinone) (198 aa).

One can recognise a Flavodoxin-like domain in the interval 6 to 190 (ILVLYYSRHG…LCRALGKRLA (185 aa)). FMN contacts are provided by residues 12–17 (SRHGAT), 79–81 (TRF), 114–120 (STASLHG), and histidine 135.

The protein belongs to the WrbA family. In terms of assembly, homodimer. It depends on FMN as a cofactor.

The enzyme catalyses a quinone + NADH + H(+) = a quinol + NAD(+). The catalysed reaction is a quinone + NADPH + H(+) = a quinol + NADP(+). The polypeptide is NAD(P)H dehydrogenase (quinone) (Pseudomonas aeruginosa (strain ATCC 15692 / DSM 22644 / CIP 104116 / JCM 14847 / LMG 12228 / 1C / PRS 101 / PAO1)).